A 382-amino-acid chain; its full sequence is MNCEREQLRGNQEAAAAPDTMAQPYASAQFAPPQNGIPAEYTAPHPHPAPEYTGQTTVPEHTLNLYPPAQTHSEQSPADTSAQTVSGTATQTDDAAPTDGQPQTQPSENTENKSQPKRLHVSNIPFRFRDPDLRQMFGQFGKILDVEIIFNERGSKGFGFVTFENSADADRAREKLHGTVVEGRKIEVNNATARVMTNKKTVNPYTNGWKLNPVVGAVYSPEFYAGTVLLCQANQEGSSMYSAPSSLVYTSAMPGFPYPAATAAAAYRGAHLRGRGRTVYNTFRAAAPPPPIPAYGGVVYQDGFYGADIYGGYAAYRYAQPTPATAAAYSDSYGRVYAADPYHHALAPAPTYGVGAMPQGSSPSTDFRGAKLHTSRPLLSGS.

The disordered stretch occupies residues 1 to 121; that stretch reads MNCEREQLRG…NKSQPKRLHV (121 aa). Residues 70-87 are compositionally biased toward polar residues; sequence QTHSEQSPADTSAQTVSG. Residues 88 to 99 are compositionally biased toward low complexity; the sequence is TATQTDDAAPTD. The segment covering 100 to 113 has biased composition (polar residues); sequence GQPQTQPSENTENK. The RRM domain maps to 117–193; that stretch reads KRLHVSNIPF…RKIEVNNATA (77 aa). Residue Arg317 is modified to Asymmetric dimethylarginine. The segment at 357–382 is disordered; that stretch reads MPQGSSPSTDFRGAKLHTSRPLLSGS.

In terms of assembly, binds to the C-terminus of ATXN2.

It is found in the nucleus. The protein resides in the cytoplasm. Functionally, RNA-binding protein that regulates alternative splicing events by binding to 5'-UGCAUGU-3' elements. Prevents binding of U2AF2 to the 3'-splice site. Regulates alternative splicing of tissue-specific exons and of differentially spliced exons during erythropoiesis. In Pongo abelii (Sumatran orangutan), this protein is RNA binding protein fox-1 homolog 1 (RBFOX1).